The following is a 643-amino-acid chain: Threonine--tRNA ligase (643 aa).

Residues 1–61 (MPIITLPDGS…TEDSKLEIIT (61 aa)) form the TGS domain. Residues 243 to 534 (DHRKIGKALD…ITEEYAGFFP (292 aa)) form a catalytic region. Positions 334, 385, and 511 each coordinate Zn(2+).

It belongs to the class-II aminoacyl-tRNA synthetase family. In terms of assembly, homodimer. Zn(2+) serves as cofactor.

The protein localises to the cytoplasm. The catalysed reaction is tRNA(Thr) + L-threonine + ATP = L-threonyl-tRNA(Thr) + AMP + diphosphate + H(+). Its function is as follows. Catalyzes the attachment of threonine to tRNA(Thr) in a two-step reaction: L-threonine is first activated by ATP to form Thr-AMP and then transferred to the acceptor end of tRNA(Thr). Also edits incorrectly charged L-seryl-tRNA(Thr). This is Threonine--tRNA ligase from Pasteurella multocida (strain Pm70).